Reading from the N-terminus, the 312-residue chain is Uracil-DNA glycosylase (312 aa).

Residues 1–11 (MSSACDHETEA) are compositionally biased toward basic and acidic residues. The tract at residues 1–61 (MSSACDHETE…PPKRRRPCGL (61 aa)) is disordered. The segment covering 22-33 (EENGSNSSTPTS) has biased composition (polar residues). The active-site Proton acceptor is D155.

The protein belongs to the uracil-DNA glycosylase (UDG) superfamily. UNG family.

It is found in the host nucleus. The catalysed reaction is Hydrolyzes single-stranded DNA or mismatched double-stranded DNA and polynucleotides, releasing free uracil.. Excises uracil residues from the DNA which can arise as a result of misincorporation of dUMP residues by DNA polymerase or deamination of cytosines. Therefore may reduce deleterious uracil incorporation into the viral genome, particularly in terminally differentiated cells which lack DNA repair enzymes. The chain is Uracil-DNA glycosylase (61) from Equine herpesvirus 1 (strain V592) (EHV-1).